A 1405-amino-acid chain; its full sequence is DNA-directed RNA polymerase subunit beta' (1405 aa).

Residues cysteine 70, cysteine 72, cysteine 85, and cysteine 88 each contribute to the Zn(2+) site. Mg(2+) contacts are provided by aspartate 460, aspartate 462, and aspartate 464. Positions 814, 888, 895, and 898 each coordinate Zn(2+).

Belongs to the RNA polymerase beta' chain family. In terms of assembly, the RNAP catalytic core consists of 2 alpha, 1 beta, 1 beta' and 1 omega subunit. When a sigma factor is associated with the core the holoenzyme is formed, which can initiate transcription. The cofactor is Mg(2+). It depends on Zn(2+) as a cofactor.

The enzyme catalyses RNA(n) + a ribonucleoside 5'-triphosphate = RNA(n+1) + diphosphate. DNA-dependent RNA polymerase catalyzes the transcription of DNA into RNA using the four ribonucleoside triphosphates as substrates. The protein is DNA-directed RNA polymerase subunit beta' of Shewanella sediminis (strain HAW-EB3).